Consider the following 426-residue polypeptide: Mediator of RNA polymerase II transcription subunit 1 (426 aa).

Residues 319 to 349 are disordered; it reads ISTSNSGSVQPKPRRKSSVLSNRRPSMTDSM. The span at 336-347 shows a compositional bias: polar residues; it reads SVLSNRRPSMTD.

Belongs to the Mediator complex subunit 1 family. Component of the Mediator complex.

It is found in the nucleus. Functionally, component of the Mediator complex, a coactivator involved in the regulated transcription of nearly all RNA polymerase II-dependent genes. Mediator functions as a bridge to convey information from gene-specific regulatory proteins to the basal RNA polymerase II transcription machinery. Mediator is recruited to promoters by direct interactions with regulatory proteins and serves as a scaffold for the assembly of a functional preinitiation complex with RNA polymerase II and the general transcription factors. This is Mediator of RNA polymerase II transcription subunit 1 (MED1) from Kluyveromyces lactis (strain ATCC 8585 / CBS 2359 / DSM 70799 / NBRC 1267 / NRRL Y-1140 / WM37) (Yeast).